The primary structure comprises 91 residues: Acylphosphatase (91 aa).

The region spanning 6 to 91 (CMRCYISGRV…WEDYISFDVL (86 aa)) is the Acylphosphatase-like domain. Active-site residues include R21 and N39.

This sequence belongs to the acylphosphatase family.

The enzyme catalyses an acyl phosphate + H2O = a carboxylate + phosphate + H(+). This is Acylphosphatase (acyP) from Legionella pneumophila subsp. pneumophila (strain Philadelphia 1 / ATCC 33152 / DSM 7513).